A 444-amino-acid polypeptide reads, in one-letter code: tRNA-2-methylthio-N(6)-dimethylallyladenosine synthase (444 aa).

Positions 4–120 constitute an MTTase N-terminal domain; that stretch reads PTYYTITFGC…LGDLLAQVEA (117 aa). [4Fe-4S] cluster contacts are provided by cysteine 13, cysteine 49, cysteine 83, cysteine 155, cysteine 159, and cysteine 162. The Radical SAM core domain occupies 141-372; sequence RDSQVTAWIN…RLVAEVAAAR (232 aa). The 65-residue stretch at 374 to 438 folds into the TRAM domain; the sequence is ARLLGQVQEV…AFSLTGEAVT (65 aa).

It belongs to the methylthiotransferase family. MiaB subfamily. As to quaternary structure, monomer. [4Fe-4S] cluster serves as cofactor.

The protein resides in the cytoplasm. The enzyme catalyses N(6)-dimethylallyladenosine(37) in tRNA + (sulfur carrier)-SH + AH2 + 2 S-adenosyl-L-methionine = 2-methylsulfanyl-N(6)-dimethylallyladenosine(37) in tRNA + (sulfur carrier)-H + 5'-deoxyadenosine + L-methionine + A + S-adenosyl-L-homocysteine + 2 H(+). Its function is as follows. Catalyzes the methylthiolation of N6-(dimethylallyl)adenosine (i(6)A), leading to the formation of 2-methylthio-N6-(dimethylallyl)adenosine (ms(2)i(6)A) at position 37 in tRNAs that read codons beginning with uridine. In Synechococcus sp. (strain JA-2-3B'a(2-13)) (Cyanobacteria bacterium Yellowstone B-Prime), this protein is tRNA-2-methylthio-N(6)-dimethylallyladenosine synthase.